A 335-amino-acid chain; its full sequence is Urokinase plasminogen activator surface receptor (335 aa).

Positions 1–22 (MGHPPLLPLLLLLHTCVPASWG) are cleaved as a signal peptide. UPAR/Ly6 domains follow at residues 23–114 (LRCM…RSRY), 115–213 (LECI…PQNG), and 214–305 (RQCY…YRSG). Disulfide bonds link Cys-25-Cys-46, Cys-28-Cys-34, and Cys-39-Cys-67. Residue Asn-74 is glycosylated (N-linked (GlcNAc...) asparagine). Cystine bridges form between Cys-93-Cys-98, Cys-117-Cys-144, Cys-120-Cys-127, Cys-137-Cys-169, Cys-175-Cys-192, Cys-193-Cys-198, Cys-216-Cys-244, Cys-219-Cys-227, Cys-237-Cys-263, Cys-269-Cys-287, and Cys-288-Cys-293. N-linked (GlcNAc...) asparagine glycosylation is found at Asn-184, Asn-194, Asn-222, and Asn-255. Gly-305 carries GPI-anchor amidated glycine lipidation. The propeptide at 306–335 (AAPQPGPAHLSLTITLLMTARLWGGTLLWT) is removed in mature form.

As to quaternary structure, monomer. Interacts with MRC2. Interacts (via the UPAR/Ly6 domains) with SRPX2. Interacts with FAP (seprase); the interaction occurs at the cell surface of invadopodia membrane. Interacts with SORL1 (via N-terminal ectodomain); this interaction decreases PLAUR internalization. The ternary complex composed of PLAUR-PLAU-SERPINE1 also interacts with SORL1. Interacts with CD82; this interaction prevents PLAUR from binding to its high affinity ligand PLAU. As to expression, expressed in neurons of the rolandic area of the brain (at protein level). Expressed in the brain.

It localises to the cell membrane. Its subcellular location is the cell projection. The protein localises to the invadopodium membrane. The protein resides in the secreted. Functionally, acts as a receptor for urokinase plasminogen activator. Plays a role in localizing and promoting plasmin formation. Mediates the proteolysis-independent signal transduction activation effects of U-PA. It is subject to negative-feedback regulation by U-PA which cleaves it into an inactive form. This is Urokinase plasminogen activator surface receptor (PLAUR) from Homo sapiens (Human).